The chain runs to 104 residues: Pyrimidine/purine nucleoside phosphorylase (104 aa).

It belongs to the nucleoside phosphorylase PpnP family.

It carries out the reaction a purine D-ribonucleoside + phosphate = a purine nucleobase + alpha-D-ribose 1-phosphate. The enzyme catalyses adenosine + phosphate = alpha-D-ribose 1-phosphate + adenine. It catalyses the reaction cytidine + phosphate = cytosine + alpha-D-ribose 1-phosphate. The catalysed reaction is guanosine + phosphate = alpha-D-ribose 1-phosphate + guanine. It carries out the reaction inosine + phosphate = alpha-D-ribose 1-phosphate + hypoxanthine. The enzyme catalyses thymidine + phosphate = 2-deoxy-alpha-D-ribose 1-phosphate + thymine. It catalyses the reaction uridine + phosphate = alpha-D-ribose 1-phosphate + uracil. The catalysed reaction is xanthosine + phosphate = alpha-D-ribose 1-phosphate + xanthine. Catalyzes the phosphorolysis of diverse nucleosides, yielding D-ribose 1-phosphate and the respective free bases. Can use uridine, adenosine, guanosine, cytidine, thymidine, inosine and xanthosine as substrates. Also catalyzes the reverse reactions. The polypeptide is Pyrimidine/purine nucleoside phosphorylase (Trichlorobacter lovleyi (strain ATCC BAA-1151 / DSM 17278 / SZ) (Geobacter lovleyi)).